Reading from the N-terminus, the 235-residue chain is Aspartate/glutamate leucyltransferase (235 aa).

It belongs to the R-transferase family. Bpt subfamily.

It is found in the cytoplasm. The enzyme catalyses N-terminal L-glutamyl-[protein] + L-leucyl-tRNA(Leu) = N-terminal L-leucyl-L-glutamyl-[protein] + tRNA(Leu) + H(+). It catalyses the reaction N-terminal L-aspartyl-[protein] + L-leucyl-tRNA(Leu) = N-terminal L-leucyl-L-aspartyl-[protein] + tRNA(Leu) + H(+). In terms of biological role, functions in the N-end rule pathway of protein degradation where it conjugates Leu from its aminoacyl-tRNA to the N-termini of proteins containing an N-terminal aspartate or glutamate. This chain is Aspartate/glutamate leucyltransferase, found in Pseudomonas putida (strain ATCC 47054 / DSM 6125 / CFBP 8728 / NCIMB 11950 / KT2440).